The following is a 507-amino-acid chain: tRNA(Ile)-lysidine synthase (507 aa).

24-29 (SGGGDS) is a binding site for ATP. The CMP/dCMP-type deaminase domain occupies 370–500 (PPEEAHMAEA…KLLRDFFARL (131 aa)). Zn(2+) contacts are provided by H420, C445, and C448.

Belongs to the tRNA(Ile)-lysidine synthase family.

It localises to the cytoplasm. It carries out the reaction cytidine(34) in tRNA(Ile2) + L-lysine + ATP = lysidine(34) in tRNA(Ile2) + AMP + diphosphate + H(+). Ligates lysine onto the cytidine present at position 34 of the AUA codon-specific tRNA(Ile) that contains the anticodon CAU, in an ATP-dependent manner. Cytidine is converted to lysidine, thus changing the amino acid specificity of the tRNA from methionine to isoleucine. In Thermus thermophilus (strain ATCC 27634 / DSM 579 / HB8), this protein is tRNA(Ile)-lysidine synthase (tilS).